The chain runs to 321 residues: MVIRLFENDKQLEVFFSSLDKKKKYLLALSGGSDSLLLMYLLRSRGISFTAVHVDYGWRETSYQEACDLASLCEREQIPFILDRQEVANPMDFSDIENIARQYRYELFYRLCKERLFAGVFLGHHADDQAETILKRVFEGAHLGNLKGMARYGTYKGITLLRPLLHITKRQIVEALDNYRIEYVQDATNADERFLRARMREQLFPYLQEIFGKNIRQPLLFLAEDSAELREYLDQQAAPFLSQVIDNEIGQFLPVGQELLQTAFLTKWVCKQFFFKQGLVASKGFLQTVYDHLVRRSEARLRLRNRTVLVKARGVIIESIY.

Position 30-35 (30-35 (SGGSDS)) interacts with ATP.

Belongs to the tRNA(Ile)-lysidine synthase family.

The protein localises to the cytoplasm. It catalyses the reaction cytidine(34) in tRNA(Ile2) + L-lysine + ATP = lysidine(34) in tRNA(Ile2) + AMP + diphosphate + H(+). In terms of biological role, ligates lysine onto the cytidine present at position 34 of the AUA codon-specific tRNA(Ile) that contains the anticodon CAU, in an ATP-dependent manner. Cytidine is converted to lysidine, thus changing the amino acid specificity of the tRNA from methionine to isoleucine. The sequence is that of tRNA(Ile)-lysidine synthase from Chlamydia muridarum (strain MoPn / Nigg).